A 101-amino-acid polypeptide reads, in one-letter code: Large ribosomal subunit protein bL9m (101 aa).

A mitochondrion-targeting transit peptide spans 1 to 32; sequence MSIMKPTTRFFRFNSLELAVSPFQRIYGQLRF.

It belongs to the bacterial ribosomal protein bL9 family. As to quaternary structure, component of the mitochondrial large ribosomal subunit (mt-LSU). Mature yeast 74S mitochondrial ribosomes consist of a small (37S) and a large (54S) subunit. The 37S small subunit contains a 15S ribosomal RNA (15S mt-rRNA) and at least 32 different proteins. The 54S large subunit contains a 21S rRNA (21S mt-rRNA) and at least 45 different proteins.

The protein resides in the mitochondrion. Its function is as follows. Component of the mitochondrial ribosome (mitoribosome), a dedicated translation machinery responsible for the synthesis of mitochondrial genome-encoded proteins, including at least some of the essential transmembrane subunits of the mitochondrial respiratory chain. The mitoribosomes are attached to the mitochondrial inner membrane and translation products are cotranslationally integrated into the membrane. This Schizosaccharomyces pombe (strain 972 / ATCC 24843) (Fission yeast) protein is Large ribosomal subunit protein bL9m.